A 100-amino-acid polypeptide reads, in one-letter code: NADH-quinone oxidoreductase subunit K (100 aa).

The next 3 membrane-spanning stretches (helical) occupy residues 4–24, 28–48, and 60–80; these read LSHG…GMII, LLFM…AFVV, and VMYI…LALL.

It belongs to the complex I subunit 4L family. NDH-1 is composed of 13 different subunits. Subunits NuoA, H, J, K, L, M, N constitute the membrane sector of the complex.

The protein localises to the cell inner membrane. The catalysed reaction is a quinone + NADH + 5 H(+)(in) = a quinol + NAD(+) + 4 H(+)(out). Its function is as follows. NDH-1 shuttles electrons from NADH, via FMN and iron-sulfur (Fe-S) centers, to quinones in the respiratory chain. The immediate electron acceptor for the enzyme in this species is believed to be ubiquinone. Couples the redox reaction to proton translocation (for every two electrons transferred, four hydrogen ions are translocated across the cytoplasmic membrane), and thus conserves the redox energy in a proton gradient. This is NADH-quinone oxidoreductase subunit K from Sodalis glossinidius (strain morsitans).